Consider the following 502-residue polypeptide: Probable malate:quinone oxidoreductase (502 aa).

It belongs to the MQO family. FAD serves as cofactor.

It carries out the reaction (S)-malate + a quinone = a quinol + oxaloacetate. The protein operates within carbohydrate metabolism; tricarboxylic acid cycle; oxaloacetate from (S)-malate (quinone route): step 1/1. The protein is Probable malate:quinone oxidoreductase of Oceanobacillus iheyensis (strain DSM 14371 / CIP 107618 / JCM 11309 / KCTC 3954 / HTE831).